The sequence spans 488 residues: Serine/threonine-protein kinase haspin homolog hrk1 (488 aa).

Residues 156-488 enclose the Protein kinase domain; it reads TFEIQKIGEA…SLLNWVRQKY (333 aa). ATP-binding positions include 162–170 and K184; that span reads IGEASYSEV. The active-site Proton acceptor is the D305.

The protein belongs to the protein kinase superfamily. Ser/Thr protein kinase family. Haspin subfamily. In terms of assembly, interacts with pds5 and swi6.

It is found in the cytoplasm. The protein resides in the chromosome. It carries out the reaction L-seryl-[protein] + ATP = O-phospho-L-seryl-[protein] + ADP + H(+). The enzyme catalyses L-threonyl-[protein] + ATP = O-phospho-L-threonyl-[protein] + ADP + H(+). In terms of biological role, serine/threonine haspin-like protein kinase involved in cell cycle regulation. Acts in chromosomal passenger complex (CPC) targeting to centromeres by phosphorylating histone H3 at 'Thr3' (H3T3ph). This chain is Serine/threonine-protein kinase haspin homolog hrk1 (hrk1), found in Schizosaccharomyces pombe (strain 972 / ATCC 24843) (Fission yeast).